The primary structure comprises 42 residues: Iota-conotoxin-like R11.1 (42 aa).

Disulfide bonds link Cys-5–Cys-19, Cys-12–Cys-22, Cys-18–Cys-27, and Cys-21–Cys-36.

The protein belongs to the conotoxin I1 superfamily. In terms of tissue distribution, expressed by the venom duct.

The protein localises to the secreted. In terms of biological role, iota-conotoxins bind to voltage-gated sodium channels (Nav) and act as agonists by shifting the voltage-dependence of activation to more hyperpolarized levels. Produces general excitatory symptoms. The sequence is that of Iota-conotoxin-like R11.1 from Conus radiatus (Rayed cone).